A 241-amino-acid chain; its full sequence is 1-(5-phosphoribosyl)-5-[(5-phosphoribosylamino)methylideneamino] imidazole-4-carboxamide isomerase (241 aa).

Aspartate 10 functions as the Proton acceptor in the catalytic mechanism. The Proton donor role is filled by aspartate 131.

Belongs to the HisA/HisF family.

Its subcellular location is the cytoplasm. The enzyme catalyses 1-(5-phospho-beta-D-ribosyl)-5-[(5-phospho-beta-D-ribosylamino)methylideneamino]imidazole-4-carboxamide = 5-[(5-phospho-1-deoxy-D-ribulos-1-ylimino)methylamino]-1-(5-phospho-beta-D-ribosyl)imidazole-4-carboxamide. It participates in amino-acid biosynthesis; L-histidine biosynthesis; L-histidine from 5-phospho-alpha-D-ribose 1-diphosphate: step 4/9. The chain is 1-(5-phosphoribosyl)-5-[(5-phosphoribosylamino)methylideneamino] imidazole-4-carboxamide isomerase from Bifidobacterium longum (strain DJO10A).